The primary structure comprises 595 residues: Aspartate--tRNA ligase (595 aa).

E180 contacts L-aspartate. An aspartate region spans residues 204–207 (QLFK). Position 226 (R226) interacts with L-aspartate. Residues 226-228 (RDE) and Q235 each bind ATP. Position 454 (H454) interacts with L-aspartate. E488 is an ATP binding site. R495 contributes to the L-aspartate binding site. 540–543 (GLDR) serves as a coordination point for ATP.

Belongs to the class-II aminoacyl-tRNA synthetase family. Type 1 subfamily. Homodimer.

Its subcellular location is the cytoplasm. It catalyses the reaction tRNA(Asp) + L-aspartate + ATP = L-aspartyl-tRNA(Asp) + AMP + diphosphate. In terms of biological role, catalyzes the attachment of L-aspartate to tRNA(Asp) in a two-step reaction: L-aspartate is first activated by ATP to form Asp-AMP and then transferred to the acceptor end of tRNA(Asp). In Clostridium acetobutylicum (strain ATCC 824 / DSM 792 / JCM 1419 / IAM 19013 / LMG 5710 / NBRC 13948 / NRRL B-527 / VKM B-1787 / 2291 / W), this protein is Aspartate--tRNA ligase.